Here is a 205-residue protein sequence, read N- to C-terminus: Small ribosomal subunit protein uS3 (205 aa).

The KH type-2 domain occupies valine 12–arginine 80.

Belongs to the universal ribosomal protein uS3 family. In terms of assembly, part of the 30S ribosomal subunit. Forms a tight complex with proteins S10 and S14.

Its function is as follows. Binds the lower part of the 30S subunit head. Binds mRNA in the 70S ribosome, positioning it for translation. This is Small ribosomal subunit protein uS3 from Buchnera aphidicola subsp. Acyrthosiphon kondoi (Acyrthosiphon kondoi symbiotic bacterium).